A 208-amino-acid polypeptide reads, in one-letter code: Granulocyte colony-stimulating factor (208 aa).

Positions 1–30 (MAQLSAQRRMKLMALQLLLWQSALWSGREA) are cleaved as a signal peptide. 2 cysteine pairs are disulfide-bonded: C72/C78 and C100/C110. An O-linked (GalNAc...) threonine glycan is attached at T169.

The protein belongs to the IL-6 superfamily. In terms of assembly, monomer. In terms of processing, O-glycosylated.

It localises to the secreted. Granulocyte/macrophage colony-stimulating factors are cytokines that act in hematopoiesis by controlling the production, differentiation, and function of 2 related white cell populations of the blood, the granulocytes and the monocytes-macrophages. This CSF induces granulocytes. This is Granulocyte colony-stimulating factor (Csf3) from Mus musculus (Mouse).